A 137-amino-acid polypeptide reads, in one-letter code: Large ribosomal subunit protein uL16 (137 aa).

Belongs to the universal ribosomal protein uL16 family. Part of the 50S ribosomal subunit.

Binds 23S rRNA and is also seen to make contacts with the A and possibly P site tRNAs. This is Large ribosomal subunit protein uL16 from Mesoplasma florum (strain ATCC 33453 / NBRC 100688 / NCTC 11704 / L1) (Acholeplasma florum).